The sequence spans 66 residues: DNA gyrase inhibitor YacG (66 aa).

Zn(2+) contacts are provided by Cys-10, Cys-13, Cys-29, and Cys-33. Positions 46–66 are disordered; sequence KRIPSDVQITDSDEWSDETRY. Positions 56–66 are enriched in acidic residues; that stretch reads DSDEWSDETRY.

It belongs to the DNA gyrase inhibitor YacG family. In terms of assembly, interacts with GyrB. Zn(2+) is required as a cofactor.

Functionally, inhibits all the catalytic activities of DNA gyrase by preventing its interaction with DNA. Acts by binding directly to the C-terminal domain of GyrB, which probably disrupts DNA binding by the gyrase. This Sodalis glossinidius (strain morsitans) protein is DNA gyrase inhibitor YacG.